The sequence spans 322 residues: uncharacterized protein (322 aa).

A run of 9 helical transmembrane segments spans residues 5 to 25, 37 to 57, 71 to 91, 109 to 129, 153 to 173, 189 to 209, 245 to 265, 268 to 288, and 300 to 320; these read LISIIGIPALAFAISTYIPGI, IGPSILAPGFWAFFKFLFKET, LPLLSIVVLWALLSITSLTSF, MMYVILGSLAFSIMGWKMPFI, SFKMITIGSFPFYLATFLPFV, LFSLAGIFGAACYFIGYVIMI, LLLIALGSLFATLYLGIAPDI, PITIVENFAIALIFPILATFV, and IYPISYVATLIGVIGFIFALL.

The protein localises to the cell membrane. This is an uncharacterized protein from Methanocaldococcus jannaschii (strain ATCC 43067 / DSM 2661 / JAL-1 / JCM 10045 / NBRC 100440) (Methanococcus jannaschii).